Here is a 232-residue protein sequence, read N- to C-terminus: GFP-like fluorescent chromoprotein dsFP483 (232 aa).

The 2-iminomethyl-5-imidazolinone (Gln-Gly) cross-link spans 66 to 68 (QYG). Residue Tyr-67 is modified to 2,3-didehydrotyrosine.

This sequence belongs to the GFP family. In terms of processing, contains a chromophore consisting of modified amino acid residues. The chromophore is formed by autocatalytic backbone condensation between Xaa-N and Gly-(N+2), oxidation of Tyr-(N+1) to didehydrotyrosine, and formation of a double bond to the alpha-amino nitrogen of residue Xaa-N. Maturation of the chromophore requires nothing other than molecular oxygen. The precise stereochemistry of the tyrosine has not been determined. As to expression, oral disk.

In terms of biological role, pigment protein that is green in color. This is GFP-like fluorescent chromoprotein dsFP483 from Discosoma striata (Striped mushroom).